Consider the following 353-residue polypeptide: Histidinol-phosphate aminotransferase 1 (353 aa).

Residue Lys-211 is modified to N6-(pyridoxal phosphate)lysine.

The protein belongs to the class-II pyridoxal-phosphate-dependent aminotransferase family. Histidinol-phosphate aminotransferase subfamily. Homodimer. Pyridoxal 5'-phosphate is required as a cofactor.

The catalysed reaction is L-histidinol phosphate + 2-oxoglutarate = 3-(imidazol-4-yl)-2-oxopropyl phosphate + L-glutamate. It participates in amino-acid biosynthesis; L-histidine biosynthesis; L-histidine from 5-phospho-alpha-D-ribose 1-diphosphate: step 7/9. The sequence is that of Histidinol-phosphate aminotransferase 1 (hisC1) from Nostoc sp. (strain PCC 7120 / SAG 25.82 / UTEX 2576).